A 330-amino-acid chain; its full sequence is MGLTQDFFPPTSELLEGGNQTSTFEFLLWGLSDQPQQQHIFFLLFLWMYVVTVAGNLLIVLAIGTDTHLHTPMYFFLASLSCADIFSTSTTVPKALVNIQTQSRSISYAGCLAQLYFFLTFGDMDIFLPATMAYDRYVAICHLLHYMMIMSLHRCAFLVTACWTLTSLLAMTRTFLIFRLSLCSKILPGFFCDLGPLMKVSCSDAQVNELVLLFLGGAVILIPFMLILVSYIRIVSAILRAPSAQGRRKAFSTCDSHLVVVALFFGTVIRAYLCPSSSSSNSVKEDTAAAVMYTVVTPLLNPFIYSMRNKDMKAAVVRLLKGRVSFSQGQ.

Topologically, residues Met1–His39 are extracellular. Asn19 is a glycosylation site (N-linked (GlcNAc...) asparagine). Residues Ile40–Val60 traverse the membrane as a helical segment. Residues Leu61–Thr71 are Cytoplasmic-facing. A helical membrane pass occupies residues Pro72 to Val92. The Extracellular portion of the chain corresponds to Pro93–Cys111. The cysteines at positions 111 and 192 are disulfide-linked. The helical transmembrane segment at Leu112–Met132 threads the bilayer. Over Ala133 to Tyr137 the chain is Cytoplasmic. Residues Val138 to Leu158 traverse the membrane as a helical segment. The Extracellular portion of the chain corresponds to Val159–Glu209. The chain crosses the membrane as a helical span at residues Leu210 to Ser230. Over Tyr231 to His257 the chain is Cytoplasmic. A helical transmembrane segment spans residues Leu258–Ser278. Over Ser279–Asp286 the chain is Extracellular. Residues Thr287 to Met307 traverse the membrane as a helical segment. Topologically, residues Arg308 to Gln330 are cytoplasmic.

It belongs to the G-protein coupled receptor 1 family.

It localises to the cell membrane. Functionally, odorant receptor. The protein is Olfactory receptor 1P1 (OR1P1) of Homo sapiens (Human).